The sequence spans 319 residues: Thiamine-monophosphate kinase (319 aa).

Mg(2+) is bound by residues D28, T43, T44, and D45. Residue H52 coordinates substrate. D73 contributes to the Mg(2+) binding site. ATP contacts are provided by residues Y104, 121-122 (GD), and R145. Position 122 (D122) interacts with Mg(2+). Position 218 (D218) interacts with Mg(2+). S220 serves as a coordination point for ATP. D221 is a binding site for Mg(2+). Residues E268 and Y315 each coordinate substrate.

The protein belongs to the thiamine-monophosphate kinase family.

It catalyses the reaction thiamine phosphate + ATP = thiamine diphosphate + ADP. The protein operates within cofactor biosynthesis; thiamine diphosphate biosynthesis; thiamine diphosphate from thiamine phosphate: step 1/1. In terms of biological role, catalyzes the ATP-dependent phosphorylation of thiamine-monophosphate (TMP) to form thiamine-pyrophosphate (TPP), the active form of vitamin B1. This chain is Thiamine-monophosphate kinase, found in Methanocaldococcus jannaschii (strain ATCC 43067 / DSM 2661 / JAL-1 / JCM 10045 / NBRC 100440) (Methanococcus jannaschii).